Reading from the N-terminus, the 471-residue chain is Glutamate--tRNA ligase 2 (471 aa).

Residues Pro15–Gly25 carry the 'HIGH' region motif. The 'KMSKS' region motif lies at Lys243 to Arg247. Lys246 is a binding site for ATP.

It belongs to the class-I aminoacyl-tRNA synthetase family. Glutamate--tRNA ligase type 1 subfamily. In terms of assembly, monomer.

The protein localises to the cytoplasm. It catalyses the reaction tRNA(Glu) + L-glutamate + ATP = L-glutamyl-tRNA(Glu) + AMP + diphosphate. Its function is as follows. Catalyzes the attachment of glutamate to tRNA(Glu) in a two-step reaction: glutamate is first activated by ATP to form Glu-AMP and then transferred to the acceptor end of tRNA(Glu). This chain is Glutamate--tRNA ligase 2, found in Cereibacter sphaeroides (strain ATCC 17025 / ATH 2.4.3) (Rhodobacter sphaeroides).